The primary structure comprises 693 residues: CREB-regulated transcription coactivator 2 (693 aa).

The span at 1-20 (MATSGANGPGSATASASNPR) shows a compositional bias: polar residues. Positions 1–30 (MATSGANGPGSATASASNPRKFSEKIALQK) are disordered. An N-acetylalanine modification is found at Ala-2. At Arg-51 the chain carries Asymmetric dimethylarginine; by PRMT6. Residues Ser-70, Ser-86, and Ser-90 each carry the phosphoserine modification. An asymmetric dimethylarginine; by PRMT6 mark is found at Arg-99, Arg-120, and Arg-123. Ser-136 carries the post-translational modification Phosphoserine. Arg-161 and Arg-168 each carry asymmetric dimethylarginine; by PRMT6. At Thr-169 the chain carries Phosphothreonine. The residue at position 171 (Ser-171) is a Phosphoserine; by AMPK, MARK2, SIK1 and SIK2. A Phosphothreonine modification is found at Thr-192. A Glycyl lysine isopeptide (Lys-Gly) (interchain with G-Cter in SUMO2) cross-link involves residue Lys-234. The Nuclear export signal signature appears at 271–287 (TGGSLPDLTNLHFPPPL). Residue Ser-274 is modified to Phosphoserine; by MARK2. Disordered regions lie at residues 282-306 (HFPP…GGNS) and 328-554 (GYDA…MSDF). Phosphoserine occurs at positions 306, 368, 393, 433, and 456. 2 stretches are compositionally biased toward low complexity: residues 331–378 (APGL…SSLA) and 386–415 (SLGH…GAPS). Over residues 447–468 (SQQQLPKQFSPTMSPTLSSITQ) the composition is skewed to polar residues. Tyr-488 carries the post-translational modification Phosphotyrosine. A phosphoserine mark is found at Ser-489, Ser-490, and Ser-492. Residues 498-507 (QPHTPKSLQQ) show a composition bias toward polar residues. Residue Thr-501 is modified to Phosphothreonine. A compositionally biased stretch (low complexity) spans 509-529 (GLPSQSCSVQSSGGQPPGRQS). 3 positions are modified to phosphoserine: Ser-613, Ser-623, and Ser-624.

This sequence belongs to the TORC family. Binds, as a tetramer, through its N-terminal region, with the bZIP domain of CREB1. 'Arg-314' in the bZIP domain of CREB1 is essential for this interaction. Interaction, via its C-terminal, with TAF4, enhances recruitment of TAF4 to CREB1. Interacts with SIK2. Interacts with 14-3-3 proteins, YWHAB and YWHAG. Interacts (probably when phosphorylated at Ser-171) with YWHAE. Interacts with calmodulin-dependent catalytic subunit PPP3CA/calcineurin A. Interaction with COP1 mediates nuclear export and degradation of CRTC2. In terms of assembly, (Microbial infection) Interaction with the human T-cell leukemia virus type 1 (HTLV-1) Tax protein is essential for optimal transcription activation by Tax. In terms of processing, phosphorylation/dephosphorylation states of Ser-171 are required for regulating transduction of CREB activity. CRTCs/TORCs are inactive when phosphorylated, and active when dephosphorylated at this site. This primary site of phosphorylation, is regulated by cAMP and calcium levels and is dependent on the phosphorylation of SIKs (SIK1 and SIK2) by LKB1. Following adenylyl cyclase activation, dephosphorylated at Ser-171 by PPP3CA/calcineurin A resulting in CRTC2 dissociation from 14-3-3 proteins and PPP3CA. Both insulin and AMPK increase this phosphorylation of CRTC2 while glucagon suppresses it. Phosphorylation at Ser-274 by MARK2 is induced under low glucose conditions and dephosphorylated in response to glucose influx. Phosphorylation at Ser-274 promotes interaction with 14-3-3 proteins and translocation to the cytoplasm. Post-translationally, asymmetric dimethylation of arginine resisues by PRMT6 enhances the association of CRTC2 with CREB on the promoters of gluconeogenic genes. In terms of tissue distribution, most abundantly expressed in the thymus. Present in both B and T-lymphocytes. Highly expressed in HEK293T cells and in insulinomas. High levels also in spleen, ovary, muscle and lung, with highest levels in muscle. Lower levels found in brain, colon, heart, kidney, prostate, small intestine and stomach. Weak expression in liver and pancreas.

It is found in the cytoplasm. The protein localises to the nucleus. Functionally, transcriptional coactivator for CREB1 which activates transcription through both consensus and variant cAMP response element (CRE) sites. Acts as a coactivator, in the SIK/TORC signaling pathway, being active when dephosphorylated and acts independently of CREB1 'Ser-133' phosphorylation. Enhances the interaction of CREB1 with TAF4. Regulates gluconeogenesis as a component of the LKB1/AMPK/TORC2 signaling pathway. Regulates the expression of specific genes such as the steroidogenic gene, StAR. Potent coactivator of PPARGC1A and inducer of mitochondrial biogenesis in muscle cells. Also coactivator for TAX activation of the human T-cell leukemia virus type 1 (HTLV-1) long terminal repeats (LTR). The polypeptide is CREB-regulated transcription coactivator 2 (CRTC2) (Homo sapiens (Human)).